Here is a 276-residue protein sequence, read N- to C-terminus: CDP-diacylglycerol--serine O-phosphatidyltransferase (276 aa).

The disordered stretch occupies residues 1–21; sequence MVESDEDFAPQEFPHTDTDVI. Phosphoserine occurs at positions 4, 34, 42, 46, 47, and 50. The next 4 membrane-spanning stretches (helical) occupy residues 82–102, 163–183, 210–230, and 248–268; these read MADYITMLNGFSGFYSIVSCL, IAFAIGFQTTFDVMILSFFVL, YFEGLPMPTTLALVLGMAYCV, and QILEFHPIILVFFIHGCGMIS.

The protein belongs to the CDP-alcohol phosphatidyltransferase class-I family. Requires Mn(2+) as cofactor. Mg(2+) is required as a cofactor.

It localises to the microsome membrane. The protein localises to the endoplasmic reticulum membrane. It is found in the mitochondrion outer membrane. The enzyme catalyses a CDP-1,2-diacyl-sn-glycerol + L-serine = a 1,2-diacyl-sn-glycero-3-phospho-L-serine + CMP + H(+). It participates in phospholipid metabolism; phosphatidylethanolamine biosynthesis; phosphatidylethanolamine from CDP-diacylglycerol: step 1/2. Catalyzes the synthesis of phosphatidylserine (PtdSer). The chain is CDP-diacylglycerol--serine O-phosphatidyltransferase (CHO1) from Saccharomyces cerevisiae (strain ATCC 204508 / S288c) (Baker's yeast).